A 130-amino-acid polypeptide reads, in one-letter code: MAENQYYGTGRRKSSAARVFIKPGSGKIVINQRSLEQYFGRETARMVVRQPLELVDMVEKLDLYITVKGGGISGQAGAIRHGITRALMEYDETLRSELRKAGFVTRDARQVERKKVGLRKARRRPQFSKR.

This sequence belongs to the universal ribosomal protein uS9 family.

The chain is Small ribosomal subunit protein uS9 from Edwardsiella ictaluri (strain 93-146).